The following is a 493-amino-acid chain: Angiopoietin-related protein 2 (493 aa).

A signal peptide spans 1–19 (MRPLCMTYWWLGLLATVGA). Coiled coils occupy residues 77–115 (EVHL…VDGG) and 152–202 (ALEL…QLEE). Residues asparagine 164 and asparagine 192 are each glycosylated (N-linked (GlcNAc...) asparagine). The Fibrinogen C-terminal domain occupies 269–489 (DKPSGPWRDC…KVVMMIRPNP (221 aa)). 2 cysteine pairs are disulfide-bonded: cysteine 278/cysteine 307 and cysteine 430/cysteine 443.

As to expression, widely expressed in heart, tongue, lung and skeletal muscle. Also found in lower levels in kidney, epididymis and testis.

Its subcellular location is the secreted. In terms of biological role, induces sprouting in endothelial cells through an autocrine and paracrine action. This is Angiopoietin-related protein 2 (Angptl2) from Mus musculus (Mouse).